A 780-amino-acid chain; its full sequence is Aconitate hydratase, mitochondrial (780 aa).

Residues 1-27 (MAPYSLLVSRLQKALGARQYHVASVLC) constitute a mitochondrion transit peptide. The residue at position 31 (K31) is an N6-succinyllysine. An N6-acetyllysine; alternate modification is found at K50. At K50 the chain carries N6-succinyllysine; alternate. Q99 lines the substrate pocket. An N6-acetyllysine; alternate mark is found at K138 and K144. K138 and K144 each carry N6-succinyllysine; alternate. 192–194 (DSH) lines the substrate pocket. Residue K233 is modified to N6-acetyllysine; alternate. The residue at position 233 (K233) is an N6-succinyllysine; alternate. Residue C385 participates in [4Fe-4S] cluster binding. An N6-succinyllysine modification is found at K411. [4Fe-4S] cluster is bound by residues C448 and C451. Residues R474 and R479 each coordinate substrate. N6-acetyllysine; alternate occurs at positions 517 and 523. N6-succinyllysine; alternate is present on residues K517 and K523. The span at 524–537 (LEAPDADELPRAEF) shows a compositional bias: basic and acidic residues. The disordered stretch occupies residues 524 to 560 (LEAPDADELPRAEFDPGQDTYQHPPKDSSGQQVDVSP). Residue K549 is modified to N6-succinyllysine. Polar residues predominate over residues 551 to 560 (SSGQQVDVSP). S559 carries the post-translational modification Phosphoserine. K573 carries the N6-acetyllysine; alternate modification. An N6-succinyllysine; alternate modification is found at K573. K591 carries the post-translational modification N6-succinyllysine. K605 carries the post-translational modification N6-acetyllysine; alternate. Residue K605 is modified to N6-succinyllysine; alternate. Position 607 (R607) interacts with substrate. Residue K628 is modified to N6-succinyllysine. S670 is subject to Phosphoserine. 670-671 (SR) serves as a coordination point for substrate. K689 carries the N6-succinyllysine modification. 2 positions are modified to N6-acetyllysine; alternate: K723 and K730. An N6-succinyllysine; alternate mark is found at K723 and K730. Residues K736 and K743 each carry the N6-acetyllysine modification.

The protein belongs to the aconitase/IPM isomerase family. In terms of assembly, monomer. The cofactor is [4Fe-4S] cluster. Forms covalent cross-links mediated by transglutaminase TGM2, between a glutamine and the epsilon-amino group of a lysine residue, forming homopolymers and heteropolymers.

The protein resides in the mitochondrion. The enzyme catalyses citrate = D-threo-isocitrate. It participates in carbohydrate metabolism; tricarboxylic acid cycle; isocitrate from oxaloacetate: step 2/2. In terms of biological role, catalyzes the isomerization of citrate to isocitrate via cis-aconitate. This Bos taurus (Bovine) protein is Aconitate hydratase, mitochondrial (ACO2).